The following is a 484-amino-acid chain: ATP synthase subunit beta, chloroplastic (484 aa).

163–170 (GGAGVGKT) is a binding site for ATP.

This sequence belongs to the ATPase alpha/beta chains family. In terms of assembly, F-type ATPases have 2 components, CF(1) - the catalytic core - and CF(0) - the membrane proton channel. CF(1) has five subunits: alpha(3), beta(3), gamma(1), delta(1), epsilon(1). CF(0) has four main subunits: a(1), b(1), b'(1) and c(9-12).

The protein resides in the plastid. It is found in the chloroplast thylakoid membrane. The catalysed reaction is ATP + H2O + 4 H(+)(in) = ADP + phosphate + 5 H(+)(out). In terms of biological role, produces ATP from ADP in the presence of a proton gradient across the membrane. The catalytic sites are hosted primarily by the beta subunits. The chain is ATP synthase subunit beta, chloroplastic from Stigeoclonium helveticum (Green alga).